Here is a 172-residue protein sequence, read N- to C-terminus: Peptide methionine sulfoxide reductase MsrA 1 (172 aa).

Residue Cys-14 is part of the active site.

This sequence belongs to the MsrA Met sulfoxide reductase family.

It carries out the reaction L-methionyl-[protein] + [thioredoxin]-disulfide + H2O = L-methionyl-(S)-S-oxide-[protein] + [thioredoxin]-dithiol. The enzyme catalyses [thioredoxin]-disulfide + L-methionine + H2O = L-methionine (S)-S-oxide + [thioredoxin]-dithiol. Functionally, has an important function as a repair enzyme for proteins that have been inactivated by oxidation. Catalyzes the reversible oxidation-reduction of methionine sulfoxide in proteins to methionine. The chain is Peptide methionine sulfoxide reductase MsrA 1 (msrA1) from Mesorhizobium japonicum (strain LMG 29417 / CECT 9101 / MAFF 303099) (Mesorhizobium loti (strain MAFF 303099)).